Reading from the N-terminus, the 353-residue chain is Tetrahedral aminopeptidase (353 aa).

Zn(2+)-binding residues include His68 and Asp182. Catalysis depends on Glu212, which acts as the Proton acceptor. Residues Glu213, Asp235, and His323 each coordinate Zn(2+).

The protein belongs to the peptidase M42 family. As to quaternary structure, homododecamer. The assembly of six dimers results in a tetrahedral-shaped structure; all 12 active sites are located on the inside of the tetrahedron. Substrate access is granted by four pores with a maximal diameter of 18 Angstroms, allowing only small peptides and unfolded proteins access to the active site. Beside the four entry ports, TET contains 12 small product release openings, which are large enough to allow passage of only single amino acid residues. It depends on Zn(2+) as a cofactor. The cofactor is Co(2+).

Its activity is regulated as follows. Inhibited by EDTA and bestatin in vitro. Is insensitive to papain, antipain, chymostatin, leupeptin, pepstatin and aprotinin. Functions as an aminopeptidase, with a clear preference for leucine as the N-terminal amino acid. However, can also cleave moderately long polypeptide substrates of various compositions in a fairly unspecific manner. Has neither carboxypeptidase nor endoproteolytic activities, and it is devoid of N-terminal deblocking activity. Is involved in protein degradation, performing degradation of oligopeptides produced by the proteasome into single amino acids. In Pyrococcus horikoshii (strain ATCC 700860 / DSM 12428 / JCM 9974 / NBRC 100139 / OT-3), this protein is Tetrahedral aminopeptidase (frvX).